The chain runs to 134 residues: Profilin-3 (134 aa).

Residues C13 and C118 are joined by a disulfide bond. An Involved in PIP2 interaction motif is present at residues 84 to 100; that stretch reads AVIRGKKGSGGITIKKT. Position 114 is a phosphothreonine (T114).

The protein belongs to the profilin family. As to quaternary structure, occurs in many kinds of cells as a complex with monomeric actin in a 1:1 ratio. In terms of processing, phosphorylated by MAP kinases.

It is found in the cytoplasm. Its subcellular location is the cytoskeleton. Functionally, binds to actin and affects the structure of the cytoskeleton. At high concentrations, profilin prevents the polymerization of actin, whereas it enhances it at low concentrations. The polypeptide is Profilin-3 (Olea europaea (Common olive)).